Reading from the N-terminus, the 271-residue chain is Phosphonoacetaldehyde hydrolase (271 aa).

Residue Asp-12 is the Nucleophile of the active site. 2 residues coordinate Mg(2+): Asp-12 and Ala-14. Lys-54 functions as the Schiff-base intermediate with substrate in the catalytic mechanism. Asp-188 is a Mg(2+) binding site.

The protein belongs to the HAD-like hydrolase superfamily. PhnX family. In terms of assembly, homodimer. Mg(2+) is required as a cofactor.

It carries out the reaction phosphonoacetaldehyde + H2O = acetaldehyde + phosphate + H(+). Involved in phosphonate degradation. The protein is Phosphonoacetaldehyde hydrolase of Vibrio campbellii (strain ATCC BAA-1116).